The sequence spans 591 residues: V-type ATP synthase alpha chain (591 aa).

An ATP-binding site is contributed by Gly233 to Thr240.

This sequence belongs to the ATPase alpha/beta chains family.

The catalysed reaction is ATP + H2O + 4 H(+)(in) = ADP + phosphate + 5 H(+)(out). Its function is as follows. Produces ATP from ADP in the presence of a proton gradient across the membrane. The V-type alpha chain is a catalytic subunit. The protein is V-type ATP synthase alpha chain of Streptococcus pneumoniae (strain ATCC 700669 / Spain 23F-1).